The sequence spans 635 residues: tRNA 5-methylaminomethyl-2-thiouridine biosynthesis bifunctional protein MnmC (635 aa).

Residues 1–227 are tRNA (mnm(5)s(2)U34)-methyltransferase; sequence MSEPIDWLPD…KRSNLQAEFD (227 aa). The interval 254 to 635 is FAD-dependent cmnm(5)s(2)U34 oxidoreductase; sequence IGGGLSGAAV…ALSTERLPAD (382 aa).

This sequence in the N-terminal section; belongs to the methyltransferase superfamily. tRNA (mnm(5)s(2)U34)-methyltransferase family. In the C-terminal section; belongs to the DAO family. FAD serves as cofactor.

The protein localises to the cytoplasm. The enzyme catalyses 5-aminomethyl-2-thiouridine(34) in tRNA + S-adenosyl-L-methionine = 5-methylaminomethyl-2-thiouridine(34) in tRNA + S-adenosyl-L-homocysteine + H(+). Functionally, catalyzes the last two steps in the biosynthesis of 5-methylaminomethyl-2-thiouridine (mnm(5)s(2)U) at the wobble position (U34) in tRNA. Catalyzes the FAD-dependent demodification of cmnm(5)s(2)U34 to nm(5)s(2)U34, followed by the transfer of a methyl group from S-adenosyl-L-methionine to nm(5)s(2)U34, to form mnm(5)s(2)U34. This is tRNA 5-methylaminomethyl-2-thiouridine biosynthesis bifunctional protein MnmC from Paracidovorax citrulli (strain AAC00-1) (Acidovorax citrulli).